The chain runs to 122 residues: FMN-binding protein (122 aa).

Monomer and homodimer. FMN serves as cofactor.

Its subcellular location is the cytoplasm. Functionally, functions as a redox protein with a potential of -325 mV. This is FMN-binding protein from Nitratidesulfovibrio vulgaris (strain DSM 19637 / Miyazaki F) (Desulfovibrio vulgaris).